Here is a 407-residue protein sequence, read N- to C-terminus: Arginine deiminase (407 aa).

Cys397 (amidino-cysteine intermediate) is an active-site residue.

This sequence belongs to the arginine deiminase family.

The protein localises to the cytoplasm. It carries out the reaction L-arginine + H2O = L-citrulline + NH4(+). Its pathway is amino-acid degradation; L-arginine degradation via ADI pathway; carbamoyl phosphate from L-arginine: step 1/2. The polypeptide is Arginine deiminase (Pediococcus pentosaceus (strain ATCC 25745 / CCUG 21536 / LMG 10740 / 183-1w)).